The chain runs to 156 residues: Small ribosomal subunit protein uS7 (156 aa).

The protein belongs to the universal ribosomal protein uS7 family. In terms of assembly, part of the 30S ribosomal subunit. Contacts proteins S9 and S11.

Functionally, one of the primary rRNA binding proteins, it binds directly to 16S rRNA where it nucleates assembly of the head domain of the 30S subunit. Is located at the subunit interface close to the decoding center, probably blocks exit of the E-site tRNA. The polypeptide is Small ribosomal subunit protein uS7 (Geobacter metallireducens (strain ATCC 53774 / DSM 7210 / GS-15)).